Consider the following 446-residue polypeptide: Tubulin beta-2 chain (446 aa).

GTP contacts are provided by Gln-11, Glu-69, Ser-138, Gly-142, Thr-143, Gly-144, Asn-204, and Asn-226. Position 69 (Glu-69) interacts with Mg(2+). Residues 424–446 (QYQEATADEEGEFDEDEEGGGDE) are disordered. The segment covering 429 to 446 (TADEEGEFDEDEEGGGDE) has biased composition (acidic residues).

It belongs to the tubulin family. Dimer of alpha and beta chains. A typical microtubule is a hollow water-filled tube with an outer diameter of 25 nm and an inner diameter of 15 nM. Alpha-beta heterodimers associate head-to-tail to form protofilaments running lengthwise along the microtubule wall with the beta-tubulin subunit facing the microtubule plus end conferring a structural polarity. Microtubules usually have 13 protofilaments but different protofilament numbers can be found in some organisms and specialized cells. Requires Mg(2+) as cofactor.

The protein localises to the cytoplasm. Its subcellular location is the cytoskeleton. Functionally, tubulin is the major constituent of microtubules, a cylinder consisting of laterally associated linear protofilaments composed of alpha- and beta-tubulin heterodimers. Microtubules grow by the addition of GTP-tubulin dimers to the microtubule end, where a stabilizing cap forms. Below the cap, tubulin dimers are in GDP-bound state, owing to GTPase activity of alpha-tubulin. In Drosophila erecta (Fruit fly), this protein is Tubulin beta-2 chain (betaTub85D).